The following is a 429-amino-acid chain: Asparagine--tRNA ligase (429 aa).

It belongs to the class-II aminoacyl-tRNA synthetase family.

The protein resides in the cytoplasm. It carries out the reaction tRNA(Asn) + L-asparagine + ATP = L-asparaginyl-tRNA(Asn) + AMP + diphosphate + H(+). This Thermoplasma acidophilum (strain ATCC 25905 / DSM 1728 / JCM 9062 / NBRC 15155 / AMRC-C165) protein is Asparagine--tRNA ligase.